Here is a 119-residue protein sequence, read N- to C-terminus: Large ribosomal subunit protein bL20 (119 aa).

Belongs to the bacterial ribosomal protein bL20 family.

Binds directly to 23S ribosomal RNA and is necessary for the in vitro assembly process of the 50S ribosomal subunit. It is not involved in the protein synthesizing functions of that subunit. This chain is Large ribosomal subunit protein bL20, found in Methylocella silvestris (strain DSM 15510 / CIP 108128 / LMG 27833 / NCIMB 13906 / BL2).